Here is a 242-residue protein sequence, read N- to C-terminus: Cytochrome c oxidase subunit 2 (242 aa).

Residues Asp-7–Ile-33 are Mitochondrial intermembrane-facing. The helical transmembrane segment at Val-34–Asn-55 threads the bilayer. The Mitochondrial matrix portion of the chain corresponds to Phe-56–Glu-73. The chain crosses the membrane as a helical span at residues Ile-74–Cys-98. The Mitochondrial intermembrane segment spans residues Asp-99–Gln-242. Residues His-177, Cys-212, Glu-214, Cys-216, His-220, and Met-223 each contribute to the Cu cation site. A Mg(2+)-binding site is contributed by Glu-214.

This sequence belongs to the cytochrome c oxidase subunit 2 family. Component of the cytochrome c oxidase (complex IV, CIV), a multisubunit enzyme composed of a catalytic core of 3 subunits and several supernumerary subunits. The complex exists as a monomer or a dimer and forms supercomplexes (SCs) in the inner mitochondrial membrane with ubiquinol-cytochrome c oxidoreductase (cytochrome b-c1 complex, complex III, CIII). Cu cation is required as a cofactor. Post-translationally, the signal sequence of COX2 is processed by IMP1.

Its subcellular location is the mitochondrion inner membrane. The catalysed reaction is 4 Fe(II)-[cytochrome c] + O2 + 8 H(+)(in) = 4 Fe(III)-[cytochrome c] + 2 H2O + 4 H(+)(out). Functionally, component of the cytochrome c oxidase, the last enzyme in the mitochondrial electron transport chain which drives oxidative phosphorylation. The respiratory chain contains 3 multisubunit complexes succinate dehydrogenase (complex II, CII), ubiquinol-cytochrome c oxidoreductase (cytochrome b-c1 complex, complex III, CIII) and cytochrome c oxidase (complex IV, CIV), that cooperate to transfer electrons derived from NADH and succinate to molecular oxygen, creating an electrochemical gradient over the inner membrane that drives transmembrane transport and the ATP synthase. Cytochrome c oxidase is the component of the respiratory chain that catalyzes the reduction of oxygen to water. Electrons originating from reduced cytochrome c in the intermembrane space (IMS) are transferred via the dinuclear copper A center (CU(A)) of subunit 2 and heme A of subunit 1 to the active site in subunit 1, a binuclear center (BNC) formed by heme A3 and copper B (CU(B)). The BNC reduces molecular oxygen to 2 water molecules using 4 electrons from cytochrome c in the IMS and 4 protons from the mitochondrial matrix. In Yarrowia lipolytica (strain CLIB 122 / E 150) (Yeast), this protein is Cytochrome c oxidase subunit 2 (COX2).